Here is a 298-residue protein sequence, read N- to C-terminus: Ribosomal RNA small subunit methyltransferase H (298 aa).

Residues 38-40 (GGH), Asp-57, Phe-84, Asp-100, and Gln-107 each bind S-adenosyl-L-methionine.

This sequence belongs to the methyltransferase superfamily. RsmH family.

Its subcellular location is the cytoplasm. It carries out the reaction cytidine(1402) in 16S rRNA + S-adenosyl-L-methionine = N(4)-methylcytidine(1402) in 16S rRNA + S-adenosyl-L-homocysteine + H(+). Its function is as follows. Specifically methylates the N4 position of cytidine in position 1402 (C1402) of 16S rRNA. The sequence is that of Ribosomal RNA small subunit methyltransferase H from Acaryochloris marina (strain MBIC 11017).